The chain runs to 415 residues: Putative transcription factor BOFH (415 aa).

Residues 159–221 form a disordered region; that stretch reads SQEPVQHQDQ…NEGEDDDGMD (63 aa). The span at 174 to 183 shows a compositional bias: gly residues; it reads INGGGRGGYW. Over residues 193 to 202 the composition is skewed to basic residues; the sequence is QQQRRRKKRL. Residues 206–220 are compositionally biased toward acidic residues; it reads ETDDDGNEGEDDDGM. 3 consecutive DNA-binding regions follow at residues 234-238, 303-310, and 374-377; these read REHPF, NKPKMRHY, and YVPT.

This sequence belongs to the FLO/LFY family. Acts in the floral primordia.

It localises to the nucleus. Functionally, controls floral meristem identity. Is required very early in flower development and may act here as a transcription factor. The chain is Putative transcription factor BOFH from Brassica oleracea var. botrytis (Cauliflower).